Reading from the N-terminus, the 284-residue chain is 2-dehydro-3-deoxyphosphooctonate aldolase (284 aa).

Belongs to the KdsA family.

It localises to the cytoplasm. It carries out the reaction D-arabinose 5-phosphate + phosphoenolpyruvate + H2O = 3-deoxy-alpha-D-manno-2-octulosonate-8-phosphate + phosphate. It functions in the pathway carbohydrate biosynthesis; 3-deoxy-D-manno-octulosonate biosynthesis; 3-deoxy-D-manno-octulosonate from D-ribulose 5-phosphate: step 2/3. Its pathway is bacterial outer membrane biogenesis; lipopolysaccharide biosynthesis. This chain is 2-dehydro-3-deoxyphosphooctonate aldolase, found in Burkholderia cenocepacia (strain HI2424).